The chain runs to 214 residues: Ribosomal RNA small subunit methyltransferase G (214 aa).

S-adenosyl-L-methionine-binding positions include G56, F61, 107 to 108, and R125; that span reads IE.

Belongs to the methyltransferase superfamily. RNA methyltransferase RsmG family.

It localises to the cytoplasm. Its function is as follows. Specifically methylates the N7 position of a guanine in 16S rRNA. This is Ribosomal RNA small subunit methyltransferase G from Syntrophomonas wolfei subsp. wolfei (strain DSM 2245B / Goettingen).